Here is a 194-residue protein sequence, read N- to C-terminus: uncharacterized protein (194 aa).

An N-terminal signal peptide occupies residues 1-29 (MKKAFLVFLSVVLVTTVFLVKQQESVAQA). Residues 104-131 (KVDELLKKAGQIVEEKVEAAKEIAASKD) are a coiled coil. Residues 149-171 (YFYYVSYVAAAGALILIILAIDI) traverse the membrane as a helical segment.

Its subcellular location is the membrane. This is an uncharacterized protein from Bacillus subtilis (strain 168).